The chain runs to 203 residues: Ponticulin-like protein H (203 aa).

The N-terminal stretch at 1–20 is a signal peptide; it reads MKLLNSLVLLAALCAITANG. Residue Asn-58 is glycosylated (N-linked (GlcNAc...) asparagine). Residues 127 to 168 are compositionally biased toward low complexity; sequence SDSTNPTSTPSTTPSATPTVTPSTTPTVTPTVTPSTTPTVAP. A disordered region spans residues 127-183; sequence SDSTNPTSTPSTTPSATPTVTPSTTPTVTPTVTPSTTPTVAPTVPPTTPPSTTTGSG. Ser-182 carries the GPI-like-anchor amidated serine lipid modification. Residues 183-203 constitute a propeptide, removed in mature form; the sequence is GSTVVASFGLIVSILLASLAL.

It belongs to the ponticulin family. Post-translationally, the GPI-like-anchor contains a phosphoceramide group, rather than a phosphatidyl group.

The protein localises to the cell membrane. In terms of biological role, binds F-actin and nucleates actin assembly. This is Ponticulin-like protein H (ponH) from Dictyostelium discoideum (Social amoeba).